Reading from the N-terminus, the 307-residue chain is Malonyl-[acyl-carrier protein] O-methyltransferase (307 aa).

The protein belongs to the methyltransferase superfamily.

The enzyme catalyses malonyl-[ACP] + S-adenosyl-L-methionine = malonyl-[ACP] methyl ester + S-adenosyl-L-homocysteine. It functions in the pathway cofactor biosynthesis; biotin biosynthesis. Converts the free carboxyl group of a malonyl-thioester to its methyl ester by transfer of a methyl group from S-adenosyl-L-methionine (SAM). It allows to synthesize pimeloyl-ACP via the fatty acid synthetic pathway. The protein is Malonyl-[acyl-carrier protein] O-methyltransferase of Nitrosospira multiformis (strain ATCC 25196 / NCIMB 11849 / C 71).